The primary structure comprises 610 residues: UvrABC system protein C (610 aa).

Residues 16-94 (SQPGVYRMYD…IKLYQPRYNV (79 aa)) enclose the GIY-YIG domain. A UVR domain is found at 204-239 (DQVLTQLIARMEKASQDLAFEEAARIRDQIQAVRRV).

It belongs to the UvrC family. As to quaternary structure, interacts with UvrB in an incision complex.

The protein resides in the cytoplasm. Its function is as follows. The UvrABC repair system catalyzes the recognition and processing of DNA lesions. UvrC both incises the 5' and 3' sides of the lesion. The N-terminal half is responsible for the 3' incision and the C-terminal half is responsible for the 5' incision. The polypeptide is UvrABC system protein C (Salmonella paratyphi B (strain ATCC BAA-1250 / SPB7)).